Reading from the N-terminus, the 264-residue chain is 5'-nucleotidase SurE (264 aa).

Residues Asp-9, Asp-10, Ser-40, and Asn-95 each coordinate a divalent metal cation.

Belongs to the SurE nucleotidase family. A divalent metal cation is required as a cofactor.

It localises to the cytoplasm. It catalyses the reaction a ribonucleoside 5'-phosphate + H2O = a ribonucleoside + phosphate. In terms of biological role, nucleotidase that shows phosphatase activity on nucleoside 5'-monophosphates. The sequence is that of 5'-nucleotidase SurE from Helicobacter hepaticus (strain ATCC 51449 / 3B1).